Reading from the N-terminus, the 88-residue chain is Small ribosomal subunit protein uS17 (88 aa).

Belongs to the universal ribosomal protein uS17 family. As to quaternary structure, part of the 30S ribosomal subunit.

In terms of biological role, one of the primary rRNA binding proteins, it binds specifically to the 5'-end of 16S ribosomal RNA. This Maridesulfovibrio salexigens (strain ATCC 14822 / DSM 2638 / NCIMB 8403 / VKM B-1763) (Desulfovibrio salexigens) protein is Small ribosomal subunit protein uS17.